Consider the following 502-residue polypeptide: Mannitol 2-dehydrogenase (502 aa).

An NAD(+)-binding site is contributed by 35–46; the sequence is IVHVGVGGFHRA.

This sequence belongs to the mannitol dehydrogenase family. As to quaternary structure, monomer.

It carries out the reaction D-mannitol + NAD(+) = D-fructose + NADH + H(+). Functionally, catalyzes the NAD(H)-dependent interconversion of D-fructose and D-mannitol in the mannitol metabolic pathway. In Pyricularia oryzae (strain 70-15 / ATCC MYA-4617 / FGSC 8958) (Rice blast fungus), this protein is Mannitol 2-dehydrogenase.